We begin with the raw amino-acid sequence, 782 residues long: E3 ubiquitin-protein ligase SopA (782 aa).

The interval 140 to 170 (SANNRPTVSEGRTPPVSPSLSLQATSSPSSP) is disordered. Residues 157 to 170 (PSLSLQATSSPSSP) are compositionally biased toward low complexity. Cys753 serves as the catalytic Glycyl thioester intermediate.

This sequence belongs to the SopA E3 ligase family. Post-translationally, ubiquitinated in the presence of host E1 ubiquitin-activating enzyme, E2 ubiquitin-conjugating enzyme and ubiquitin.

The protein resides in the secreted. It localises to the host cell. It catalyses the reaction S-ubiquitinyl-[E2 ubiquitin-conjugating enzyme]-L-cysteine + [acceptor protein]-L-lysine = [E2 ubiquitin-conjugating enzyme]-L-cysteine + N(6)-ubiquitinyl-[acceptor protein]-L-lysine.. Functionally, effector proteins function to alter host cell physiology and promote bacterial survival in host tissues. This protein is an E3 ubiquitin ligase that interferes with host's ubiquitination pathway. The protein is E3 ubiquitin-protein ligase SopA (sopA) of Salmonella agona (strain SL483).